The following is a 932-amino-acid chain: MTTGFLQKIFGSRNQRLVKQYQKTVATINALETQIEKLTDDQLRGKTDEFRQRVAAGESLDKLLPEAFAVCREASRRVLKMRHFDVQMIGGMVLHYGKIAEMRTGEGKTLVATLPVYLNALAGRGVHVVTVNDYLAQRDAEWMARLYNFLGLSVGINLSGMEHDQKQQAYAADITYGTNNEFGFDYLRDNMVYETDARVQRALNFAVVDEVDSILIDEARTPLIISGQAEDHTELYVRMNALPPLLERQIGEEKADGTGVEKPGDYTLDEKARQVFLTESGHEKAERLLAEWGLIGEGESLYAPQNITLMHHVYAALRAHTLFHKDQHYVVQNGEVVIVDEFTGRLMAGRRWSDGLHQAVEAKEHVKIQSENQTLASITFQNYFRMYAKLAGMTGTADTEAYEFNEIYGLETVVIPTNRPPKRIDKQDQIYKTAKERYDAVIRDIRDCYERGQPVLVGTTSIENSELLSHLLKQAGLPHEVLNAKQHEREAAIVAEAGRPKRITIATNMAGRGTDIVLGGNAEKQAAFIEADDAIPADEKARRIQKLHDEWETLHEEVKAAGGLHIIGTERHESRRIDNQLRGRAGRQGDPGSSRFYLSLDDPLLRIFAGDRVRSIMDRLKMPEGEAIEAGIVTRSIESAQRKVEARNFDIRKQLLEYDDVSNDQRKVIYQQRNELLEAHDITETITAMRHGVITEVVRQFVPEGSIEEQWDVPELEEALRNDWQLDLAIQEMVNESSSITAEEILDAVMTAADEQYEAKVAMVGRESFSAFERSVMLQTVDRLWREHLAALDHLRQGIHLRGYAQKNPKQEYKREAFELFAAMLDAIKQEVTRIVMNVQIQSPEQLEEAAEQIEERGGHLENVEYQHADYADAGAPVANVTAAAAATATADMVGSAMTHSGPGGEMPKVGRNDPCPCGSGKKYKQCHGKLS.

ATP-binding positions include Gln87, 105-109 (GEGKT), and Asp515. 4 residues coordinate Zn(2+): Cys916, Cys918, Cys927, and His928.

It belongs to the SecA family. Monomer and homodimer. Part of the essential Sec protein translocation apparatus which comprises SecA, SecYEG and auxiliary proteins SecDF-YajC and YidC. Zn(2+) serves as cofactor.

The protein resides in the cell inner membrane. It localises to the cytoplasm. The enzyme catalyses ATP + H2O + cellular proteinSide 1 = ADP + phosphate + cellular proteinSide 2.. Its function is as follows. Part of the Sec protein translocase complex. Interacts with the SecYEG preprotein conducting channel. Has a central role in coupling the hydrolysis of ATP to the transfer of proteins into and across the cell membrane, serving both as a receptor for the preprotein-SecB complex and as an ATP-driven molecular motor driving the stepwise translocation of polypeptide chains across the membrane. This chain is Protein translocase subunit SecA, found in Burkholderia orbicola (strain MC0-3).